A 716-amino-acid chain; its full sequence is Fatty acid oxidation complex subunit alpha (716 aa).

Positions 1–189 (MIYQSPTIQV…KVGAIDAVVA (189 aa)) are enoyl-CoA hydratase/isomerase. Position 296 (aspartate 296) interacts with substrate. Residues 311 to 716 (KNIDTAAVLG…AANNGSYYQS (406 aa)) are 3-hydroxyacyl-CoA dehydrogenase. NAD(+) contacts are provided by residues methionine 324, aspartate 343, 400–402 (VVE), lysine 407, and serine 429. The For 3-hydroxyacyl-CoA dehydrogenase activity role is filled by histidine 450. Asparagine 453 is a binding site for NAD(+). Residue asparagine 500 participates in substrate binding.

This sequence in the N-terminal section; belongs to the enoyl-CoA hydratase/isomerase family. In the C-terminal section; belongs to the 3-hydroxyacyl-CoA dehydrogenase family. Heterotetramer of two alpha chains (FadB) and two beta chains (FadA).

The enzyme catalyses a (3S)-3-hydroxyacyl-CoA + NAD(+) = a 3-oxoacyl-CoA + NADH + H(+). The catalysed reaction is a (3S)-3-hydroxyacyl-CoA = a (2E)-enoyl-CoA + H2O. It catalyses the reaction a 4-saturated-(3S)-3-hydroxyacyl-CoA = a (3E)-enoyl-CoA + H2O. It carries out the reaction (3S)-3-hydroxybutanoyl-CoA = (3R)-3-hydroxybutanoyl-CoA. The enzyme catalyses a (3Z)-enoyl-CoA = a 4-saturated (2E)-enoyl-CoA. The catalysed reaction is a (3E)-enoyl-CoA = a 4-saturated (2E)-enoyl-CoA. Its pathway is lipid metabolism; fatty acid beta-oxidation. Involved in the aerobic and anaerobic degradation of long-chain fatty acids via beta-oxidation cycle. Catalyzes the formation of 3-oxoacyl-CoA from enoyl-CoA via L-3-hydroxyacyl-CoA. It can also use D-3-hydroxyacyl-CoA and cis-3-enoyl-CoA as substrate. The protein is Fatty acid oxidation complex subunit alpha of Shewanella sediminis (strain HAW-EB3).